We begin with the raw amino-acid sequence, 101 residues long: Ribonuclease kappa-B (101 aa).

The next 2 helical transmembrane spans lie at 13-33 and 68-88; these read ACGIVLSVWGVIMLSMLGIFF and VGINCFIAAAIYVGVGAVSLC.

The protein belongs to the RNase K family.

The protein resides in the membrane. Functionally, endoribonuclease which preferentially cleaves ApU and ApG phosphodiester bonds. The polypeptide is Ribonuclease kappa-B (rnasekb) (Danio rerio (Zebrafish)).